We begin with the raw amino-acid sequence, 191 residues long: MGEKPWQPLLQSFEKLSNCVQTHLSNFIGIKNTPPSSQSTIQNPIISLDSSPPIATNSSSLQKLPLKDKSTGPVTKEDLGRATWTFLHTLAAQYPEKPTRQQKKDVKELMTILSRMYPCRECADHFKEILRSNPAQAGSQEEFSQWLCHVHNTVNRSLGKLVFPCERVDARWGKLECEQKSCDLHGTSMDF.

The 101-residue stretch at 72 to 172 (GPVTKEDLGR…FPCERVDARW (101 aa)) folds into the ERV/ALR sulfhydryl oxidase domain. FAD contacts are provided by Lys-76, Arg-81, Trp-84, Glu-121, His-125, Cys-148, His-151, Asn-152, Asn-155, Lys-160, and Arg-171. Cys-119 and Cys-122 are disulfide-bonded. A disulfide bridge links Cys-148 with Cys-165. The cysteines at positions 177 and 182 are disulfide-linked. The Required for dimerization and substrate specificity motif lies at 177 to 182 (CEQKSC).

As to quaternary structure, homodimer. Requires FAD as cofactor. Post-translationally, contains three disulfide bonds; one catalytic disulfide (Cys-119 to Cys-122), one structural disulfide (Cys-148 to Cys-165), and one shuttle disulfide (Cys-177 to Cys-182).

The protein localises to the mitochondrion. The catalysed reaction is 2 R'C(R)SH + O2 = R'C(R)S-S(R)CR' + H2O2. Functionally, FAD-dependent sulfhydryl oxidase that catalyzes disulfide bond formation. Oxidizes thioredoxin in vitro. Required for the import and folding of small cysteine-containing proteins in the mitochondrial intermembrane space, and can act independently of the oxidoreductase MIA40. Can oxidize the cytochrome c oxidase assembly protein COX19, a typical substrate of MIA40. This chain is FAD-linked sulfhydryl oxidase ERV1 (ERV1), found in Arabidopsis thaliana (Mouse-ear cress).